A 66-amino-acid chain; its full sequence is Large ribosomal subunit protein bL35 (66 aa).

The span at 1–24 shows a compositional bias: basic residues; it reads MPKQKTHRGAAKRFKKTGSGKLKR. Positions 1 to 26 are disordered; it reads MPKQKTHRGAAKRFKKTGSGKLKRDH.

Belongs to the bacterial ribosomal protein bL35 family.

The polypeptide is Large ribosomal subunit protein bL35 (Bacillus cytotoxicus (strain DSM 22905 / CIP 110041 / 391-98 / NVH 391-98)).